Consider the following 141-residue polypeptide: Period circadian protein (141 aa).

The disordered stretch occupies residues 1 to 141 (EGSGGSGSSG…VTLTESLLNK (141 aa)). Polar residues predominate over residues 11-23 (HFTTGSNVHMSSV). Residues 29-68 (GGTGGTGTGTGTGTGTGTGTGTGTGTGTGTGTGTGTGTGT) are compositionally biased toward gly residues. 19 tandem repeats follow at residues 30 to 31 (GT), 33 to 34 (GT), 35 to 36 (GT), 37 to 38 (GT), 39 to 40 (GT), 41 to 42 (GT), 43 to 44 (GT), 45 to 46 (GT), 47 to 48 (GT), 49 to 50 (GT), 51 to 52 (GT), 53 to 54 (GT), 55 to 56 (GT), 57 to 58 (GT), 59 to 60 (GT), 61 to 62 (GT), 63 to 64 (GT), 65 to 66 (GT), and 67 to 68 (GT). Residues 30–94 (GTGGTGTGTG…ANGTGTGKGT (65 aa)) form a 32 X 2 AA approximate tandem repeats of G-T region. One copy of the 20; approximate repeat lies at 69–70 (AS). A compositionally biased stretch (low complexity) spans 69–85 (ASGTATGTASGTATGTA). The stretch at 71–72 (GT) is repeat 21. Residues 73–74 (AT) form a 22; approximate repeat. Copy 23 of the repeat occupies 75-76 (GT). A 24; approximate repeat occupies 77–78 (AS). Copy 25 of the repeat occupies 79–80 (GT). A 26; approximate repeat occupies 81-82 (AT). Repeat unit 27 spans residues 83–84 (GT). One copy of the 28; approximate repeat lies at 85-86 (AN). 2 tandem repeats follow at residues 87–88 (GT) and 89–90 (GT). Residues 91–92 (GK) form a 31; approximate repeat. Residues 93–94 (GT) form repeat 32. Residues 101–113 (SGSGSGTGTGTGT) show a composition bias toward gly residues. Positions 114–129 (GTTTTTTTGNNSSSST) are enriched in low complexity. Over residues 130-141 (PPVTLTESLLNK) the composition is skewed to polar residues.

Forms a heterodimer with timeless (TIM); the complex then translocates into the nucleus. Post-translationally, phosphorylated with a circadian rhythmicity, probably by the double-time protein (dbt). Phosphorylation could be implicated in the stability of per monomer and in the formation of heterodimer per-tim.

The protein localises to the nucleus. The protein resides in the cytoplasm. Its subcellular location is the perinuclear region. Its function is as follows. Essential for biological clock functions. Determines the period length of circadian and ultradian rhythms; an increase in PER dosage leads to shortened circadian rhythms and a decrease leads to lengthened circadian rhythms. Essential for the circadian rhythmicity of locomotor activity, eclosion behavior, and for the rhythmic component of the male courtship song that originates in the thoracic nervous system. The biological cycle depends on the rhythmic formation and nuclear localization of the TIM-PER complex. Light induces the degradation of TIM, which promotes elimination of PER. Nuclear activity of the heterodimer coordinatively regulates PER and TIM transcription through a negative feedback loop. Behaves as a negative element in circadian transcriptional loop. Does not appear to bind DNA, suggesting indirect transcriptional inhibition. The sequence is that of Period circadian protein (per) from Drosophila serrata (Fruit fly).